We begin with the raw amino-acid sequence, 60 residues long: Large ribosomal subunit protein bL32 (60 aa).

Basic residues predominate over residues 1-20 (MAVQKSRKSRSRRDMRRSHH). The interval 1 to 22 (MAVQKSRKSRSRRDMRRSHHRM) is disordered.

Belongs to the bacterial ribosomal protein bL32 family.

In Psychrobacter arcticus (strain DSM 17307 / VKM B-2377 / 273-4), this protein is Large ribosomal subunit protein bL32.